The primary structure comprises 432 residues: Gamma-glutamyl phosphate reductase (432 aa).

The protein belongs to the gamma-glutamyl phosphate reductase family.

Its subcellular location is the cytoplasm. The enzyme catalyses L-glutamate 5-semialdehyde + phosphate + NADP(+) = L-glutamyl 5-phosphate + NADPH + H(+). It participates in amino-acid biosynthesis; L-proline biosynthesis; L-glutamate 5-semialdehyde from L-glutamate: step 2/2. In terms of biological role, catalyzes the NADPH-dependent reduction of L-glutamate 5-phosphate into L-glutamate 5-semialdehyde and phosphate. The product spontaneously undergoes cyclization to form 1-pyrroline-5-carboxylate. In Deinococcus radiodurans (strain ATCC 13939 / DSM 20539 / JCM 16871 / CCUG 27074 / LMG 4051 / NBRC 15346 / NCIMB 9279 / VKM B-1422 / R1), this protein is Gamma-glutamyl phosphate reductase.